The sequence spans 125 residues: Ribonuclease VapC19 (125 aa).

The region spanning 3–122 (LIDTTIAVDH…RHFPMFPDLQ (120 aa)) is the PINc domain. 2 residues coordinate Mg(2+): Asp-5 and Asp-93.

Belongs to the PINc/VapC protein family. Mg(2+) is required as a cofactor.

In terms of biological role, toxic component of a type II toxin-antitoxin (TA) system. An RNase. Its toxic effect is neutralized by coexpression with cognate antitoxin VapB19. The protein is Ribonuclease VapC19 of Mycobacterium tuberculosis (strain CDC 1551 / Oshkosh).